A 408-amino-acid chain; its full sequence is Aminopeptidase T (408 aa).

6 residues coordinate a divalent metal cation: Glu250, Glu316, Glu340, His345, His376, and Asp378.

The protein belongs to the peptidase M29 family. Homodimer. Requires Co(2+) as cofactor. Zn(2+) is required as a cofactor. It depends on Mg(2+) as a cofactor.

Metal-dependent exopeptidase. This chain is Aminopeptidase T, found in Thermus thermophilus (strain ATCC 27634 / DSM 579 / HB8).